Reading from the N-terminus, the 87-residue chain is Large ribosomal subunit protein bL27 (87 aa).

It belongs to the bacterial ribosomal protein bL27 family.

This is Large ribosomal subunit protein bL27 from Wigglesworthia glossinidia brevipalpis.